We begin with the raw amino-acid sequence, 373 residues long: Glutamate 5-kinase (373 aa).

ATP is bound at residue K15. The substrate site is built by S55, D142, and N154. ATP-binding positions include 174–175 (TD) and 216–222 (TGGMATK). A PUA domain is found at 281–359 (AGSIVVDAGA…SEIERILGFR (79 aa)).

The protein belongs to the glutamate 5-kinase family.

The protein localises to the cytoplasm. The catalysed reaction is L-glutamate + ATP = L-glutamyl 5-phosphate + ADP. Its pathway is amino-acid biosynthesis; L-proline biosynthesis; L-glutamate 5-semialdehyde from L-glutamate: step 1/2. Catalyzes the transfer of a phosphate group to glutamate to form L-glutamate 5-phosphate. This is Glutamate 5-kinase from Geobacter sp. (strain M21).